A 535-amino-acid polypeptide reads, in one-letter code: Cytochrome P450 4c3 (535 aa).

Positions 342 and 481 each coordinate heme.

Belongs to the cytochrome P450 family. Heme serves as cofactor.

The protein resides in the endoplasmic reticulum membrane. The protein localises to the microsome membrane. Functionally, may be involved in the metabolism of insect hormones and in the breakdown of synthetic insecticides. This Drosophila melanogaster (Fruit fly) protein is Cytochrome P450 4c3 (Cyp4c3).